Consider the following 111-residue polypeptide: Putative pterin-4-alpha-carbinolamine dehydratase (111 aa).

It belongs to the pterin-4-alpha-carbinolamine dehydratase family.

The enzyme catalyses (4aS,6R)-4a-hydroxy-L-erythro-5,6,7,8-tetrahydrobiopterin = (6R)-L-erythro-6,7-dihydrobiopterin + H2O. This chain is Putative pterin-4-alpha-carbinolamine dehydratase, found in Chlorobaculum tepidum (strain ATCC 49652 / DSM 12025 / NBRC 103806 / TLS) (Chlorobium tepidum).